Here is a 326-residue protein sequence, read N- to C-terminus: NADH-ubiquinone oxidoreductase chain 1 (326 aa).

The next 9 helical transmembrane spans lie at 1–21 (MFLLSLLIKIITIILPLLVAV), 41–61 (PNIVGVFGLLQPLADGLKLFV), 72–92 (IIIFILAPILTFLLALVSWCV), 104–124 (INIGVLYILAISSLGVYGIIT), 152–172 (IGLILINVLLCSGSLNFTEIV), 177–197 (SIWFVIPLFPIFIMFYISILA), 234–256 (YANMILMCSLTTILFFGGWLPPF), 268–288 (VWFGLKTTFLLFGFIWIRSSF), and 303–323 (ILLPLSLAWVFLISGILLSFN).

Belongs to the complex I subunit 1 family.

Its subcellular location is the mitochondrion inner membrane. The catalysed reaction is a ubiquinone + NADH + 5 H(+)(in) = a ubiquinol + NAD(+) + 4 H(+)(out). In terms of biological role, core subunit of the mitochondrial membrane respiratory chain NADH dehydrogenase (Complex I) that is believed to belong to the minimal assembly required for catalysis. Complex I functions in the transfer of electrons from NADH to the respiratory chain. The immediate electron acceptor for the enzyme is believed to be ubiquinone. The sequence is that of NADH-ubiquinone oxidoreductase chain 1 (ND1) from Chondrus crispus (Carrageen Irish moss).